The chain runs to 310 residues: Protein BIG GRAIN 1 (310 aa).

The interval 77 to 140 is disordered; it reads SYRARAPGPH…EKKAKKPGAS (64 aa). A compositionally biased stretch (low complexity) spans 90 to 106; the sequence is SSSSECSSYGGFSSSEA.

The protein belongs to the BIG GRAIN 1 (BG1) plant protein family. In terms of tissue distribution, mostly expressed in the vascular tissues of leaves, culms and young panicles, especially in hulls.

The protein resides in the cell membrane. Functionally, involved in auxin transport. Positive regulator of the auxin signaling pathway involved in gravitropism, plant growth and grain development. The protein is Protein BIG GRAIN 1 of Oryza sativa subsp. japonica (Rice).